Consider the following 82-residue polypeptide: Small ribosomal subunit protein bS16c (82 aa).

This sequence belongs to the bacterial ribosomal protein bS16 family.

Its subcellular location is the plastid. The protein localises to the chloroplast. The polypeptide is Small ribosomal subunit protein bS16c (Porphyra purpurea (Red seaweed)).